Here is a 547-residue protein sequence, read N- to C-terminus: Chaperonin GroEL (547 aa).

Residues 30–33 (TLGP), lysine 51, 87–91 (DGTTT), glycine 415, and aspartate 495 contribute to the ATP site.

The protein belongs to the chaperonin (HSP60) family. In terms of assembly, forms a cylinder of 14 subunits composed of two heptameric rings stacked back-to-back. Interacts with the co-chaperonin GroES.

The protein resides in the cytoplasm. The enzyme catalyses ATP + H2O + a folded polypeptide = ADP + phosphate + an unfolded polypeptide.. In terms of biological role, together with its co-chaperonin GroES, plays an essential role in assisting protein folding. The GroEL-GroES system forms a nano-cage that allows encapsulation of the non-native substrate proteins and provides a physical environment optimized to promote and accelerate protein folding. This Shewanella pealeana (strain ATCC 700345 / ANG-SQ1) protein is Chaperonin GroEL.